Here is a 232-residue protein sequence, read N- to C-terminus: Ribosomal RNA small subunit methyltransferase G (232 aa).

S-adenosyl-L-methionine is bound by residues Gly-93, Leu-98, 144–145 (VE), and Arg-163.

It belongs to the methyltransferase superfamily. RNA methyltransferase RsmG family.

Its subcellular location is the cytoplasm. It catalyses the reaction guanosine(527) in 16S rRNA + S-adenosyl-L-methionine = N(7)-methylguanosine(527) in 16S rRNA + S-adenosyl-L-homocysteine. Functionally, specifically methylates the N7 position of guanine in position 527 of 16S rRNA. This chain is Ribosomal RNA small subunit methyltransferase G, found in Burkholderia pseudomallei (strain 1710b).